Here is a 400-residue protein sequence, read N- to C-terminus: Enoyl-[acyl-carrier-protein] reductase [NADH] 1 (400 aa).

NAD(+) contacts are provided by residues 48-53 (GASSGY), 74-75 (FE), 111-112 (DA), and 139-140 (LA). Tyr225 provides a ligand contact to substrate. Catalysis depends on Tyr235, which acts as the Proton donor. Residues Lys244 and 273–275 (VVT) contribute to the NAD(+) site.

The protein belongs to the TER reductase family. In terms of assembly, monomer.

The catalysed reaction is a 2,3-saturated acyl-[ACP] + NAD(+) = a (2E)-enoyl-[ACP] + NADH + H(+). Its pathway is lipid metabolism; fatty acid biosynthesis. In terms of biological role, involved in the final reduction of the elongation cycle of fatty acid synthesis (FAS II). Catalyzes the reduction of a carbon-carbon double bond in an enoyl moiety that is covalently linked to an acyl carrier protein (ACP). The sequence is that of Enoyl-[acyl-carrier-protein] reductase [NADH] 1 from Vibrio vulnificus (strain CMCP6).